The following is an 85-amino-acid chain: Photosystem I reaction center subunit PsaK (85 aa).

Helical transmembrane passes span valine 13–isoleucine 33 and glycine 59–leucine 79.

The protein belongs to the PsaG/PsaK family.

It is found in the cellular thylakoid membrane. In Synechococcus sp. (strain WH7803), this protein is Photosystem I reaction center subunit PsaK.